The following is a 937-amino-acid chain: Scaffold attachment factor B1 (937 aa).

The disordered stretch occupies residues 1-35; sequence MAETLSGLGDASAAGAAAVSSAASETGTRRLSDLR. Position 2 is an N-acetylalanine (alanine 2). Residues 11 to 24 show a composition bias toward low complexity; sequence ASAAGAAAVSSAAS. Phosphoserine is present on residues serine 24 and serine 55. An SAP domain is found at 31-65; the sequence is LSDLRVIDLRAELKKRNLDSSGNKSVLMERLKKAI. The interval 64 to 117 is disordered; the sequence is AIEDEGGNPDEIEVTSECNKKMPKRPSKGRKPEDEGVEDNGLEENSGDGQEDVE. Over residues 67–77 the composition is skewed to acidic residues; it reads DEGGNPDEIEV. Residue serine 79 is modified to Phosphoserine. The span at 98–117 shows a compositional bias: acidic residues; sequence EGVEDNGLEENSGDGQEDVE. Residues lysine 172 and lysine 186 each participate in a glycyl lysine isopeptide (Lys-Gly) (interchain with G-Cter in SUMO2) cross-link. Position 188 is a phosphothreonine (threonine 188). Phosphoserine occurs at positions 195, 197, and 209. Residues 222 to 429 are disordered; the sequence is GETCKSEPVK…EKGRSSCGRN (208 aa). Positions 225–234 are enriched in basic and acidic residues; sequence CKSEPVKEEG. A Glycyl lysine isopeptide (Lys-Gly) (interchain with G-Cter in SUMO) cross-link involves residue lysine 231. Residues 268-287 are compositionally biased toward acidic residues; it reads EEEEEEEEEDQEEEQEEEGD. Lysine 316 participates in a covalent cross-link: Glycyl lysine isopeptide (Lys-Gly) (interchain with G-Cter in SUMO). Residues 341–356 show a composition bias toward polar residues; sequence EQSSTAAQLPEATSQE. The span at 370–380 shows a compositional bias: basic and acidic residues; that stretch reads QDSKEDVKKFA. Lysine 403 participates in a covalent cross-link: Glycyl lysine isopeptide (Lys-Gly) (interchain with G-Cter in SUMO2). A phosphoserine mark is found at serine 405 and serine 406. Over residues 412–423 the composition is skewed to basic and acidic residues; the sequence is DTKRLSREEKGR. Lysine 414 participates in a covalent cross-link: Glycyl lysine isopeptide (Lys-Gly) (interchain with G-Cter in SUMO2). The RRM domain maps to 428 to 506; that stretch reads RNFWVSGLSS…KMISVEKAKS (79 aa). Serine 437 carries the post-translational modification Phosphoserine. Basic and acidic residues-rich tracts occupy residues 499 to 573 and 581 to 592; these read ISVE…ERSR and GTERTVVMDKSK. 3 disordered regions span residues 499–661, 684–738, and 771–937; these read ISVE…WERE, RMER…YEVD, and FDHR…TRRY. Residues lysine 505, lysine 536, lysine 565, and lysine 592 each participate in a glycyl lysine isopeptide (Lys-Gly) (interchain with G-Cter in SUMO2) cross-link. The interval 550–814 is interaction with POLR2A; SFRS1; SFRS9 and SFRS10; the sequence is TDDGSTEKSK…RHGGPERHGR (265 aa). Lysine 600 is covalently cross-linked (Glycyl lysine isopeptide (Lys-Gly) (interchain with G-Cter in SUMO1); alternate). Lysine 600 participates in a covalent cross-link: Glycyl lysine isopeptide (Lys-Gly) (interchain with G-Cter in SUMO2); alternate. Phosphoserine occurs at positions 602, 604, 623, and 626. Residues 603 to 661 are compositionally biased toward basic and acidic residues; the sequence is GSKERASKSQDRKSASREKRSVVSFDKVKESRKSRDSESRRERERSEREQRLQAQWERE. A Nuclear localization signal motif is present at residues 621–638; the sequence is KRSVVSFDKVKESRKSRD. The interaction with SAFB2 stretch occupies residues 621–937; the sequence is KRSVVSFDKV…PSDARFTRRY (317 aa). Position 629 is an N6-acetyllysine (lysine 629). Residues 652 to 726 adopt a coiled-coil conformation; sequence QRLQAQWERE…RQQELRYEQE (75 aa). A compositionally biased stretch (basic and acidic residues) spans 771 to 818; sequence FDHRDRGRYPNHSVDRREGSRSMMGDREGQHYPERHGGPERHGRDSRD. An Omega-N-methylarginine modification is found at arginine 832. Basic and acidic residues-rich tracts occupy residues 838–854 and 863–873; these read PRRD…DDRA and MMERDHKRWQG. Residue lysine 869 forms a Glycyl lysine isopeptide (Lys-Gly) (interchain with G-Cter in SUMO2) linkage. 4 positions are modified to asymmetric dimethylarginine: arginine 890, arginine 896, arginine 906, and arginine 912. A compositionally biased stretch (basic and acidic residues) spans 927 to 937; sequence RPSDARFTRRY.

As to quaternary structure, monomer and homodimer. Forms heterodimers with SAFB2. Interacts with KHDRBS3. Interacts with CLK2. Interacts with POLR2A, ASF/SRSF1, SRp30c/SRFS9 and TRA2B/SFRS10. Interacts with SRPK1 and inhibits its activity. Interacts with RBMX. Interacts with FUS. Interacts with ZBED4. In terms of processing, sumoylated by PIAS1 with SUMO1 and SUMO2/3, desumoylated by SENP1. Sumoylation is required for transcriptional repressor activity.

Its subcellular location is the nucleus. Binds to scaffold/matrix attachment region (S/MAR) DNA and forms a molecular assembly point to allow the formation of a 'transcriptosomal' complex (consisting of SR proteins and RNA polymerase II) coupling transcription and RNA processing. Functions as an estrogen receptor corepressor and can also bind to the HSP27 promoter and decrease its transcription. Thereby acts as a negative regulator of cell proliferation. When associated with RBMX, binds to and stimulates transcription from the SREBF1 promoter. The polypeptide is Scaffold attachment factor B1 (Safb) (Mus musculus (Mouse)).